A 159-amino-acid polypeptide reads, in one-letter code: Capsid protein (159 aa).

The residue at position 2 (Ser-2) is an N-acetylserine; by host.

The protein belongs to the virgaviridae capsid protein family.

It localises to the virion. Its function is as follows. Capsid protein self-assembles to form rod-shaped virions about 18 nm in diameter with a central canal enclosing the viral genomic RNA. This chain is Capsid protein (CP), found in Nicotiana tabacum (Common tobacco).